The sequence spans 130 residues: Gloverin (130 aa).

As to expression, hemolymph.

Its subcellular location is the secreted. Antibacterial protein active against Gram-negative bacteria. The polypeptide is Gloverin (Hyalophora cecropia (Cecropia moth)).